Reading from the N-terminus, the 126-residue chain is UPF0102 protein plu4003 (126 aa).

Belongs to the UPF0102 family.

This is UPF0102 protein plu4003 from Photorhabdus laumondii subsp. laumondii (strain DSM 15139 / CIP 105565 / TT01) (Photorhabdus luminescens subsp. laumondii).